Here is a 446-residue protein sequence, read N- to C-terminus: tRNA-2-methylthio-N(6)-dimethylallyladenosine synthase (446 aa).

An MTTase N-terminal domain is found at 2–122 (KKAYVKSYGC…LPDLLRQSRE (121 aa)). C11, C47, C85, C157, C161, and C164 together coordinate [4Fe-4S] cluster. The region spanning 143-375 (RNRGVTGFLT…QDLLDRQRHA (233 aa)) is the Radical SAM core domain. Positions 378-440 (AASVGTLTEI…SNSLFGEALE (63 aa)) constitute a TRAM domain.

This sequence belongs to the methylthiotransferase family. MiaB subfamily. Monomer. Requires [4Fe-4S] cluster as cofactor.

The protein resides in the cytoplasm. It catalyses the reaction N(6)-dimethylallyladenosine(37) in tRNA + (sulfur carrier)-SH + AH2 + 2 S-adenosyl-L-methionine = 2-methylsulfanyl-N(6)-dimethylallyladenosine(37) in tRNA + (sulfur carrier)-H + 5'-deoxyadenosine + L-methionine + A + S-adenosyl-L-homocysteine + 2 H(+). In terms of biological role, catalyzes the methylthiolation of N6-(dimethylallyl)adenosine (i(6)A), leading to the formation of 2-methylthio-N6-(dimethylallyl)adenosine (ms(2)i(6)A) at position 37 in tRNAs that read codons beginning with uridine. This chain is tRNA-2-methylthio-N(6)-dimethylallyladenosine synthase, found in Methylorubrum extorquens (strain CM4 / NCIMB 13688) (Methylobacterium extorquens).